The following is a 456-amino-acid chain: 3-isopropylmalate dehydratase large subunit (456 aa).

3 residues coordinate [4Fe-4S] cluster: Cys-336, Cys-396, and Cys-399.

This sequence belongs to the aconitase/IPM isomerase family. LeuC type 1 subfamily. As to quaternary structure, heterodimer of LeuC and LeuD. The cofactor is [4Fe-4S] cluster.

The catalysed reaction is (2R,3S)-3-isopropylmalate = (2S)-2-isopropylmalate. Its pathway is amino-acid biosynthesis; L-leucine biosynthesis; L-leucine from 3-methyl-2-oxobutanoate: step 2/4. Its function is as follows. Catalyzes the isomerization between 2-isopropylmalate and 3-isopropylmalate, via the formation of 2-isopropylmaleate. This Staphylococcus aureus (strain MW2) protein is 3-isopropylmalate dehydratase large subunit.